The sequence spans 201 residues: tRNA (guanine-N(7)-)-methyltransferase (201 aa).

Positions 33, 58, 85, and 106 each coordinate S-adenosyl-L-methionine. Asp-106 is an active-site residue. Substrate contacts are provided by residues Lys-110, Asp-142, and 180 to 183 (TTYE).

The protein belongs to the class I-like SAM-binding methyltransferase superfamily. TrmB family.

It catalyses the reaction guanosine(46) in tRNA + S-adenosyl-L-methionine = N(7)-methylguanosine(46) in tRNA + S-adenosyl-L-homocysteine. It functions in the pathway tRNA modification; N(7)-methylguanine-tRNA biosynthesis. Its function is as follows. Catalyzes the formation of N(7)-methylguanine at position 46 (m7G46) in tRNA. The protein is tRNA (guanine-N(7)-)-methyltransferase of Mesomycoplasma hyopneumoniae (strain 7448) (Mycoplasma hyopneumoniae).